Consider the following 82-residue polypeptide: RNA-binding protein Hfq (82 aa).

Positions 10 to 70 constitute a Sm domain; that stretch reads DAFLNQVRKD…ISTVAPLRPI (61 aa).

It belongs to the Hfq family. In terms of assembly, homohexamer.

Its function is as follows. RNA chaperone that binds small regulatory RNA (sRNAs) and mRNAs to facilitate mRNA translational regulation in response to envelope stress, environmental stress and changes in metabolite concentrations. Also binds with high specificity to tRNAs. The sequence is that of RNA-binding protein Hfq from Syntrophomonas wolfei subsp. wolfei (strain DSM 2245B / Goettingen).